The primary structure comprises 2620 residues: Ubiquitin carboxyl-terminal hydrolase 24 (2620 aa).

Residues 3–44 (SEEEQHMTTLLCMGFSDPATIRKALRLAKNDINEAVALLTNE) enclose the UBA domain. Positions 45 to 102 (RPGLDYGGYEPMDSGGGPSPGPGGGPRGDGGGDGGGGGPSRGGSTGGGGGFDPPPAYH) are disordered. The span at 58–95 (SGGGPSPGPGGGPRGDGGGDGGGGGPSRGGSTGGGGGF) shows a compositional bias: gly residues. Phosphoserine occurs at positions 63 and 88. Tyrosine 942 bears the Phosphotyrosine mark. 2 disordered regions span residues 1034-1054 (TSGS…SSSS) and 1129-1151 (TLLS…QQHQ). Over residues 1131–1151 (LSESSSQSSKSPSLSSKQQHQ) the composition is skewed to low complexity. Phosphoserine occurs at positions 1141 and 1285. The 354-residue stretch at 1689-2042 (VGLRNGGATC…NAYMLFYQRV (354 aa)) folds into the USP domain. Cysteine 1698 serves as the catalytic Nucleophile. The interval 1921-1945 (ARQDSSSEVGENGRSVDQGGGGSPR) is disordered. Serine 1943 carries the post-translational modification Phosphoserine. The active-site Proton acceptor is the histidine 1970. 3 positions are modified to phosphoserine: serine 2047, serine 2077, and serine 2561. The interval 2063–2090 (AEDLSLSAPSSPEISPQSSPRPHRPNND) is disordered. The segment covering 2069 to 2082 (SAPSSPEISPQSSP) has biased composition (low complexity). Threonine 2565 bears the Phosphothreonine mark. Residues 2575-2620 (EKEQSGSSNGSESSPANENGDRHLQQGSESPMMIGELRSDLDDVDP) form a disordered region. The segment covering 2579-2592 (SGSSNGSESSPANE) has biased composition (low complexity). Position 2604 is a phosphoserine (serine 2604). The segment covering 2611-2620 (LRSDLDDVDP) has biased composition (basic and acidic residues).

It belongs to the peptidase C19 family. (Microbial infection) Interacts with human cytomegalovirus protein UL38.

It carries out the reaction Thiol-dependent hydrolysis of ester, thioester, amide, peptide and isopeptide bonds formed by the C-terminal Gly of ubiquitin (a 76-residue protein attached to proteins as an intracellular targeting signal).. In terms of biological role, ubiquitin-specific protease that regulates cell survival in various contexts through modulating the protein stability of some of its substrates including DDB2, MCL1 or TP53. Plays a positive role on ferritinophagy where ferritin is degraded in lysosomes and releases free iron. This Homo sapiens (Human) protein is Ubiquitin carboxyl-terminal hydrolase 24 (USP24).